A 61-amino-acid chain; its full sequence is Potassium channel toxin alpha-KTx 5.3 (61 aa).

Positions 1 to 28 are cleaved as a signal peptide; the sequence is MHNYYKIVLIMVAFFAVIITFSNIQVEG. 3 cysteine pairs are disulfide-bonded: C31–C49, C36–C54, and C40–C56. Positions 34–37 are [R/K]XCQ motif; it reads KRCQ. At H59 the chain carries Histidine amide.

Belongs to the short scorpion toxin superfamily. Potassium channel inhibitor family. Alpha-KTx 05 subfamily. As to expression, expressed by the venom gland.

It localises to the secreted. Its function is as follows. Blocks small conductance calcium-activated potassium channels (KCNN, SK). Has also been shown to weakly inhibit Kv11.1/KCNH2/ERG1, Kv1.2/KCNA2, Kv1.3/KCNA3 and Kv2.1/KCNB1 voltage-gated potassium channels. In Olivierus martensii (Manchurian scorpion), this protein is Potassium channel toxin alpha-KTx 5.3.